The following is a 1194-amino-acid chain: Pre-mRNA-processing ATP-dependent RNA helicase prp-5 (1194 aa).

3 disordered regions span residues Met1–Lys201, Ala224–Ala248, and Ala452–Gly484. Composition is skewed to basic and acidic residues over residues Arg21–Asp37 and Ser44–Pro154. Residues Pro156–Thr176 show a composition bias toward polar residues. A compositionally biased stretch (basic and acidic residues) spans Glu177–Arg186. Residues Ser232–Ala248 are compositionally biased toward low complexity. Residues Glu455–Asn469 show a composition bias toward basic and acidic residues. Residues Gln561–Met589 carry the Q motif motif. The region spanning Leu592–Ile770 is the Helicase ATP-binding domain. Ala605–Thr612 contacts ATP. The DEAD box signature appears at Asp718 to Asp721. In terms of domain architecture, Helicase C-terminal spans Arg797–Arg945. Disordered regions lie at residues Val952–Lys1011 and Asp1025–Ala1056. Basic and acidic residues-rich tracts occupy residues Gly967–Met980, Glu997–Lys1011, and Asp1025–Ala1036.

The protein belongs to the DEAD box helicase family. DDX46/PRP5 subfamily.

It is found in the nucleus. The enzyme catalyses ATP + H2O = ADP + phosphate + H(+). Functionally, ATP-dependent RNA helicase involved spliceosome assembly and in nuclear splicing. Catalyzes an ATP-dependent conformational change of U2 snRNP. Bridges U1 and U2 snRNPs and enables stable U2 snRNP association with intron RNA. The sequence is that of Pre-mRNA-processing ATP-dependent RNA helicase prp-5 (prp-5) from Neurospora crassa (strain ATCC 24698 / 74-OR23-1A / CBS 708.71 / DSM 1257 / FGSC 987).